We begin with the raw amino-acid sequence, 309 residues long: UDP-3-O-acyl-N-acetylglucosamine deacetylase (309 aa).

H78, H237, and D241 together coordinate Zn(2+). The Proton donor role is filled by H264.

It belongs to the LpxC family. Zn(2+) is required as a cofactor.

It carries out the reaction a UDP-3-O-[(3R)-3-hydroxyacyl]-N-acetyl-alpha-D-glucosamine + H2O = a UDP-3-O-[(3R)-3-hydroxyacyl]-alpha-D-glucosamine + acetate. It functions in the pathway glycolipid biosynthesis; lipid IV(A) biosynthesis; lipid IV(A) from (3R)-3-hydroxytetradecanoyl-[acyl-carrier-protein] and UDP-N-acetyl-alpha-D-glucosamine: step 2/6. Functionally, catalyzes the hydrolysis of UDP-3-O-myristoyl-N-acetylglucosamine to form UDP-3-O-myristoylglucosamine and acetate, the committed step in lipid A biosynthesis. The protein is UDP-3-O-acyl-N-acetylglucosamine deacetylase of Methylobacillus flagellatus (strain ATCC 51484 / DSM 6875 / VKM B-1610 / KT).